The sequence spans 469 residues: Glutamate--tRNA ligase (469 aa).

The 'HIGH' region signature appears at P9 to G19. Residues C98, C100, C125, and D127 each coordinate Zn(2+). The 'KMSKS' region signature appears at K236–R240. ATP is bound at residue K239.

The protein belongs to the class-I aminoacyl-tRNA synthetase family. Glutamate--tRNA ligase type 1 subfamily. In terms of assembly, monomer. It depends on Zn(2+) as a cofactor.

The protein resides in the cytoplasm. The enzyme catalyses tRNA(Glu) + L-glutamate + ATP = L-glutamyl-tRNA(Glu) + AMP + diphosphate. Its function is as follows. Catalyzes the attachment of glutamate to tRNA(Glu) in a two-step reaction: glutamate is first activated by ATP to form Glu-AMP and then transferred to the acceptor end of tRNA(Glu). The protein is Glutamate--tRNA ligase of Shewanella halifaxensis (strain HAW-EB4).